The primary structure comprises 651 residues: MBT domain-containing protein 1 (651 aa).

The tract at residues 21 to 55 is disordered; that stretch reads SFGMFDGYDSCSEDTSSSSSSDESEEEVAPLPSSL. The segment covering 29 to 41 has biased composition (low complexity); the sequence is DSCSEDTSSSSSS. The FCS-type zinc finger occupies 68-103; the sequence is PDGKSGMATCEMCGMVGVRDAFYSKTKRFCSVSCSR. Residues Cys77, Cys80, Cys97, and Cys101 each coordinate Zn(2+). MBT repeat units lie at residues 164–268, 276–373, 374–479, and 487–583; these read FSWG…LVPP, TNWK…IGHR, FKRT…LTPP, and FKWF…LQPP. 2 disordered regions span residues 581–610 and 629–651; these read QPPAPQSNKDSQSNISKQKKKSKSQPYKGH and TFLQGASDQESNGSGSYYIKQEP. The segment covering 586-596 has biased composition (low complexity); the sequence is QSNKDSQSNIS. The span at 597-610 shows a compositional bias: basic residues; sequence KQKKKSKSQPYKGH. Polar residues predominate over residues 632–643; it reads QGASDQESNGSG.

As to quaternary structure, monomer. Component of the NuA4 histone acetyltransferase complex.

The protein localises to the nucleus. It localises to the chromosome. Functionally, chromatin reader component of the NuA4 histone acetyltransferase complex, a multiprotein complex involved in transcriptional activation of select genes principally by acetylation of nucleosomal histones H4 and H2A. The NuA4 complex plays a direct role in repair of DNA double-strand breaks (DSBs) by promoting homologous recombination (HR). MBTD1 specifically recognizes and binds monomethylated and dimethylated 'Lys-20' on histone H4 (H4K20me1 and H4K20me2, respectively). In the NuA4 complex, MBTD1 promotes recruitment of the complex to H4K20me marks by competing with TP53BP1 for binding to H4K20me. Following recruitment to H4K20me at DNA breaks, the NuA4 complex catalyzes acetylation of 'Lys-15' on histone H2A (H2AK15), blocking the ubiquitination mark required for TP53BP1 localization at DNA breaks, thereby promoting homologous recombination (HR). The protein is MBT domain-containing protein 1 of Xenopus tropicalis (Western clawed frog).